A 210-amino-acid polypeptide reads, in one-letter code: uncharacterized protein (210 aa).

A run of 5 helical transmembrane segments spans residues 42–62, 66–86, 126–146, 147–167, and 189–209; these read ITLG…VLFV, ALHG…GFLM, VVVY…EMWQ, IILA…VISL, and AGIV…NEII.

Belongs to the Rht family.

The protein resides in the cell membrane. This is an uncharacterized protein from Haemophilus influenzae (strain ATCC 51907 / DSM 11121 / KW20 / Rd).